The chain runs to 183 residues: Mid1-interacting protein 1 (183 aa).

Met-1 bears the N-acetylmethionine mark. 2 positions are modified to phosphoserine: Ser-75 and Ser-79.

The protein belongs to the SPOT14 family. Homodimer in the absence of THRSP. Heterodimer with THRSP. The homodimer interacts with ACACA and ACACB. Promotes polymerization of Acetyl-CoA carboxylase to form complexes that contain MID1IP1 and ACACA and/or ACACB. Interaction with THRSP interferes with ACACA binding.

It localises to the nucleus. It is found in the cytoplasm. The protein resides in the cytoskeleton. Its function is as follows. Plays a role in the regulation of lipogenesis in liver. Up-regulates ACACA enzyme activity. Required for efficient lipid biosynthesis, including triacylglycerol, diacylglycerol and phospholipid. Involved in stabilization of microtubules. This is Mid1-interacting protein 1 (MID1IP1) from Homo sapiens (Human).